The sequence spans 315 residues: Cobalamin biosynthesis protein CobD (315 aa).

5 consecutive transmembrane segments (helical) span residues glycine 54–leucine 74, isoleucine 78–threonine 98, alanine 152–methionine 172, isoleucine 203–leucine 223, and leucine 295–phenylalanine 315.

This sequence belongs to the CobD/CbiB family.

It localises to the cell membrane. It functions in the pathway cofactor biosynthesis; adenosylcobalamin biosynthesis. In terms of biological role, converts cobyric acid to cobinamide by the addition of aminopropanol on the F carboxylic group. This is Cobalamin biosynthesis protein CobD from Listeria monocytogenes serotype 4b (strain F2365).